The following is a 313-amino-acid chain: Porphobilinogen deaminase (313 aa).

Position 240 is an S-(dipyrrolylmethanemethyl)cysteine (cysteine 240).

The protein belongs to the HMBS family. In terms of assembly, monomer. Dipyrromethane is required as a cofactor.

The catalysed reaction is 4 porphobilinogen + H2O = hydroxymethylbilane + 4 NH4(+). The protein operates within porphyrin-containing compound metabolism; protoporphyrin-IX biosynthesis; coproporphyrinogen-III from 5-aminolevulinate: step 2/4. Tetrapolymerization of the monopyrrole PBG into the hydroxymethylbilane pre-uroporphyrinogen in several discrete steps. This Moorella thermoacetica (strain ATCC 39073 / JCM 9320) protein is Porphobilinogen deaminase.